The chain runs to 488 residues: Glutamyl-tRNA(Gln) amidotransferase subunit A (488 aa).

Residues lysine 77 and serine 152 each act as charge relay system in the active site. The active-site Acyl-ester intermediate is serine 176.

This sequence belongs to the amidase family. GatA subfamily. In terms of assembly, heterotrimer of A, B and C subunits.

It carries out the reaction L-glutamyl-tRNA(Gln) + L-glutamine + ATP + H2O = L-glutaminyl-tRNA(Gln) + L-glutamate + ADP + phosphate + H(+). In terms of biological role, allows the formation of correctly charged Gln-tRNA(Gln) through the transamidation of misacylated Glu-tRNA(Gln) in organisms which lack glutaminyl-tRNA synthetase. The reaction takes place in the presence of glutamine and ATP through an activated gamma-phospho-Glu-tRNA(Gln). The protein is Glutamyl-tRNA(Gln) amidotransferase subunit A of Streptococcus pyogenes serotype M49 (strain NZ131).